The following is a 122-amino-acid chain: Large ribosomal subunit protein bL12 (122 aa).

Belongs to the bacterial ribosomal protein bL12 family. In terms of assembly, homodimer. Part of the 50S ribosomal subunit; present in 4 copies per ribosome. Forms part of the ribosomal stalk which helps the ribosome interact with GTP-bound translation factors. Forms a pentameric L10(L12)2(L12)2 complex, where L10 forms an elongated spine to which 2 L12 dimers bind in a sequential fashion.

Functionally, forms part of the ribosomal stalk which helps the ribosome interact with GTP-bound translation factors. Is thus essential for accurate translation. The chain is Large ribosomal subunit protein bL12 from Geobacillus stearothermophilus (Bacillus stearothermophilus).